A 123-amino-acid chain; its full sequence is Small ribosomal subunit protein uS12 (123 aa).

The segment at 11-32 is disordered; it reads PRQEKTYREKARHLGASPQKRG. Asp-89 bears the 3-methylthioaspartic acid mark.

Belongs to the universal ribosomal protein uS12 family. In terms of assembly, part of the 30S ribosomal subunit. Contacts proteins S8 and S17. May interact with IF1 in the 30S initiation complex.

Its function is as follows. With S4 and S5 plays an important role in translational accuracy. Interacts with and stabilizes bases of the 16S rRNA that are involved in tRNA selection in the A site and with the mRNA backbone. Located at the interface of the 30S and 50S subunits, it traverses the body of the 30S subunit contacting proteins on the other side and probably holding the rRNA structure together. The combined cluster of proteins S8, S12 and S17 appears to hold together the shoulder and platform of the 30S subunit. This Methylocella silvestris (strain DSM 15510 / CIP 108128 / LMG 27833 / NCIMB 13906 / BL2) protein is Small ribosomal subunit protein uS12.